We begin with the raw amino-acid sequence, 5098 residues long: Malformin synthetase mlfA (5098 aa).

An adenylation 1 region spans residues 225–616 (ERHAANRPHS…CGRADTQVKL (392 aa)). Positions 756–829 (SRLEQEIQLA…EAASLAKVQE (74 aa)) constitute a Carrier 1 domain. Position 790 is an O-(pantetheine 4'-phosphoryl)serine (serine 790). Positions 867–1298 (EDVFPCTTMQ…ALDSLTLLQA (432 aa)) are condensation 1. The segment at 1326–1715 (DGWVTRQPES…GRKDTQVKLR (390 aa)) is adenylation 2. The Carrier 2 domain occupies 1853 to 1930 (TAASELERTL…QLAAEFGEPA (78 aa)). At serine 1890 the chain carries O-(pantetheine 4'-phosphoryl)serine. Disordered regions lie at residues 1930 to 1960 (AGQS…DGVD) and 1993 to 2022 (GSSS…RVVS). Low complexity-rich tracts occupy residues 1933-1957 (SASS…STND) and 1993-2011 (GSSS…SSSS). Residues 2063 to 2478 (EDIYPATALQ…ALSHSDRQTL (416 aa)) are condensation 2. Residues 2501–2893 (VRTPHAPAVC…IGRRDGQLKL (393 aa)) form an adenylation 3 region. One can recognise a Carrier 3 domain in the interval 3029-3105 (RPVTAQEREM…QLMRHLSATR (77 aa)). At serine 3066 the chain carries O-(pantetheine 4'-phosphoryl)serine. 2 condensation regions span residues 3122-3587 (WVAL…TYDQ) and 3608-4027 (NIYP…EQLM). The tract at residues 4052-4442 (HASREAVCAW…VGRKDNQIKF (391 aa)) is adenylation 4. In terms of domain architecture, Carrier 4 spans 4576 to 4652 (MPSTAAERKM…DLAYRTTNLV (77 aa)). Serine 4613 carries the post-translational modification O-(pantetheine 4'-phosphoryl)serine. The segment at 4689-5016 (DVLPTTSFQR…LQTIVQHQNN (328 aa)) is condensation 5.

It belongs to the NRP synthetase family.

Its pathway is secondary metabolite biosynthesis. Functionally, nonribosomal peptide synthetase; part of the gene cluster that mediates the biosynthesis of malformins, cyclic pentapeptides with a disulfide bond between 2 consecutive cysteins, that show potential anti-tumor as well as antimalarial and antitrypanosomal properties. The nonribosomal peptide synthetase mlfA is responsible of the formation of the cyclic pentapeptide. The malformin biosynthesis clusters in malformin-producing fungi also contain enzymes involved in the formation of the disulfide bond between the two consecutive cysteins within malformins, in addition to additional tailoring enzymes such as methyltransferases or oxidoreductases. They are also composed of up to 4 major facilitator superfamily transporters, and transcription factors probably involved in the regulation of the expression of those clusters. This is Malformin synthetase mlfA from Aspergillus homomorphus (strain CBS 101889).